The following is a 102-amino-acid chain: 10 kDa heat shock protein, mitochondrial (102 aa).

Alanine 2 is modified (N-acetylalanine). Lysine 8 is modified (N6-acetyllysine). Lysine 28 is modified (N6-succinyllysine). Lysine 40 carries the N6-acetyllysine; alternate modification. N6-malonyllysine; alternate is present on residues lysine 40, lysine 54, and lysine 56. 3 positions are modified to N6-succinyllysine; alternate: lysine 40, lysine 54, and lysine 56. Lysine 56 bears the N6-acetyllysine; alternate mark. At serine 57 the chain carries Phosphoserine. 2 positions are modified to N6-acetyllysine; alternate: lysine 66 and lysine 70. Lysine 66 and lysine 70 each carry N6-succinyllysine; alternate. Threonine 79 is subject to Phosphothreonine. Lysine 80 and lysine 86 each carry N6-acetyllysine; alternate. N6-succinyllysine; alternate occurs at positions 80 and 86. Lysine 99 bears the N6-acetyllysine mark.

This sequence belongs to the GroES chaperonin family. In terms of assembly, homoheptamer arranged in a ring structure. 2 heptameric Hsp10 rings interact with a Hsp60 tetradecamer in the structure of a back-to-back double heptameric ring to form the symmetrical football complex.

Its subcellular location is the mitochondrion matrix. Functionally, co-chaperonin implicated in mitochondrial protein import and macromolecular assembly. Together with Hsp60, facilitates the correct folding of imported proteins. May also prevent misfolding and promote the refolding and proper assembly of unfolded polypeptides generated under stress conditions in the mitochondrial matrix. The functional units of these chaperonins consist of heptameric rings of the large subunit Hsp60, which function as a back-to-back double ring. In a cyclic reaction, Hsp60 ring complexes bind one unfolded substrate protein per ring, followed by the binding of ATP and association with 2 heptameric rings of the co-chaperonin Hsp10. This leads to sequestration of the substrate protein in the inner cavity of Hsp60 where, for a certain period of time, it can fold undisturbed by other cell components. Synchronous hydrolysis of ATP in all Hsp60 subunits results in the dissociation of the chaperonin rings and the release of ADP and the folded substrate protein. In Mus musculus (Mouse), this protein is 10 kDa heat shock protein, mitochondrial (Hspe1).